A 436-amino-acid chain; its full sequence is Trigger factor (436 aa).

Residues 163–248 (GDRVTIDFEG…VKKIEAAHLP (86 aa)) enclose the PPIase FKBP-type domain.

It belongs to the FKBP-type PPIase family. Tig subfamily.

It localises to the cytoplasm. The catalysed reaction is [protein]-peptidylproline (omega=180) = [protein]-peptidylproline (omega=0). Its function is as follows. Involved in protein export. Acts as a chaperone by maintaining the newly synthesized protein in an open conformation. Functions as a peptidyl-prolyl cis-trans isomerase. The polypeptide is Trigger factor (Polaromonas naphthalenivorans (strain CJ2)).